Consider the following 194-residue polypeptide: Peptidyl-tRNA hydrolase (194 aa).

TRNA is bound at residue Tyr-16. The active-site Proton acceptor is the His-21. Phe-67, Asn-69, and Asn-115 together coordinate tRNA.

This sequence belongs to the PTH family. In terms of assembly, monomer.

The protein resides in the cytoplasm. It carries out the reaction an N-acyl-L-alpha-aminoacyl-tRNA + H2O = an N-acyl-L-amino acid + a tRNA + H(+). Its function is as follows. Hydrolyzes ribosome-free peptidyl-tRNAs (with 1 or more amino acids incorporated), which drop off the ribosome during protein synthesis, or as a result of ribosome stalling. In terms of biological role, catalyzes the release of premature peptidyl moieties from peptidyl-tRNA molecules trapped in stalled 50S ribosomal subunits, and thus maintains levels of free tRNAs and 50S ribosomes. This chain is Peptidyl-tRNA hydrolase, found in Sodalis glossinidius (strain morsitans).